The sequence spans 645 residues: Sentrin-specific protease 1 (645 aa).

The interval 1 to 200 (MDDIADRMRM…REIYRQLLQM (200 aa)) is interaction with CCAR2. A phosphoserine mark is found at Ser-57, Ser-117, and Ser-157. The disordered stretch occupies residues 92–117 (QSANGQWRNSTPSSSSSLQKSRNSRS). Low complexity predominate over residues 99–117 (RNSTPSSSSSLQKSRNSRS). The Nuclear localization signal signature appears at 171-177 (PKKTQRR). The tract at residues 285-313 (KDSGTLHHPHHHHSVPHQPDNLAASNTQS) is disordered. Protease stretches follow at residues 451–614 (LTIT…YADC) and 451–615 (LTIT…ADCI). Catalysis depends on residues His-534 and Asp-551. Residues 575 to 578 (KKRK) carry the Nuclear localization signal motif. Residue Cys-604 is the Nucleophile of the active site. Positions 629 to 635 (PYFRKRM) match the Nuclear localization signal motif. The short motif at 636–645 (VWEILHRKLL) is the Nuclear export signal element.

Belongs to the peptidase C48 family. In terms of assembly, interacts with RBM33; promoting ALKBH5 desumoylation and subsequent activation.

The protein resides in the nucleus. Its subcellular location is the cytoplasm. Its function is as follows. Protease that catalyzes two essential functions in the SUMO pathway. The first is the hydrolysis of an alpha-linked peptide bond at the C-terminal end of the small ubiquitin-like modifier (SUMO) propeptides, SUMO1, SUMO2 and SUMO3 leading to the mature form of the proteins. The second is the deconjugation of SUMO1, SUMO2 and SUMO3 from targeted proteins, by cleaving an epsilon-linked peptide bond between the C-terminal glycine of the mature SUMO and the lysine epsilon-amino group of the target protein. Deconjugates SUMO1 from HIPK2. Deconjugates SUMO1 from HDAC1 and BHLHE40/DEC1, which decreases its transcriptional repression activity. Deconjugates SUMO1 from CLOCK, which decreases its transcriptional activation activity. Deconjugates SUMO2 from MTA1. Inhibits N(6)-methyladenosine (m6A) RNA methylation by mediating SUMO1 deconjugation from METTL3 and ALKBH5: METTL3 inhibits the m6A RNA methyltransferase activity, while ALKBH5 desumoylation promotes m6A demethylation. Desumoylates CCAR2 which decreases its interaction with SIRT1. Deconjugates SUMO1 from GPS2. The sequence is that of Sentrin-specific protease 1 (SENP1) from Pongo abelii (Sumatran orangutan).